Here is a 242-residue protein sequence, read N- to C-terminus: Segregation and condensation protein A (242 aa).

The protein belongs to the ScpA family. In terms of assembly, component of a cohesin-like complex composed of ScpA, ScpB and the Smc homodimer, in which ScpA and ScpB bind to the head domain of Smc. The presence of the three proteins is required for the association of the complex with DNA.

Its subcellular location is the cytoplasm. Functionally, participates in chromosomal partition during cell division. May act via the formation of a condensin-like complex containing Smc and ScpB that pull DNA away from mid-cell into both cell halves. This is Segregation and condensation protein A from Lactococcus lactis subsp. cremoris (strain SK11).